We begin with the raw amino-acid sequence, 315 residues long: 6-phosphogluconolactonase-like protein 2 (315 aa).

Phosphoserine occurs at positions 42 and 64. Residues 59–85 are disordered; that stretch reads CKSTASAAEGKSGSSGSGSGSSKPKKE. Residues 60–70 are compositionally biased toward low complexity; sequence KSTASAAEGKS.

The protein belongs to the glucosamine/galactosamine-6-phosphate isomerase family. 6-phosphogluconolactonase subfamily.

The protein resides in the cytoplasm. May be involved in regulation of tRNA subcellular distribution. The chain is 6-phosphogluconolactonase-like protein 2 (SOL2) from Saccharomyces cerevisiae (strain ATCC 204508 / S288c) (Baker's yeast).